A 341-amino-acid chain; its full sequence is S-adenosylmethionine:tRNA ribosyltransferase-isomerase (341 aa).

This sequence belongs to the QueA family. Monomer.

It localises to the cytoplasm. The catalysed reaction is 7-aminomethyl-7-carbaguanosine(34) in tRNA + S-adenosyl-L-methionine = epoxyqueuosine(34) in tRNA + adenine + L-methionine + 2 H(+). Its pathway is tRNA modification; tRNA-queuosine biosynthesis. Its function is as follows. Transfers and isomerizes the ribose moiety from AdoMet to the 7-aminomethyl group of 7-deazaguanine (preQ1-tRNA) to give epoxyqueuosine (oQ-tRNA). The chain is S-adenosylmethionine:tRNA ribosyltransferase-isomerase from Symbiobacterium thermophilum (strain DSM 24528 / JCM 14929 / IAM 14863 / T).